Consider the following 84-residue polypeptide: Cytochrome b559 subunit alpha (84 aa).

A helical membrane pass occupies residues 22 to 36 (IIHSITIPSLFVSGW). Residue His-24 coordinates heme.

It belongs to the PsbE/PsbF family. In terms of assembly, heterodimer of an alpha subunit and a beta subunit. PSII is composed of 1 copy each of membrane proteins PsbA, PsbB, PsbC, PsbD, PsbE, PsbF, PsbH, PsbI, PsbJ, PsbK, PsbL, PsbM, PsbT, PsbX, PsbY, PsbZ, Psb30/Ycf12, at least 3 peripheral proteins of the oxygen-evolving complex and a large number of cofactors. It forms dimeric complexes. Heme b is required as a cofactor.

The protein resides in the plastid. The protein localises to the chloroplast thylakoid membrane. This b-type cytochrome is tightly associated with the reaction center of photosystem II (PSII). PSII is a light-driven water:plastoquinone oxidoreductase that uses light energy to abstract electrons from H(2)O, generating O(2) and a proton gradient subsequently used for ATP formation. It consists of a core antenna complex that captures photons, and an electron transfer chain that converts photonic excitation into a charge separation. In Phaeodactylum tricornutum (strain CCAP 1055/1), this protein is Cytochrome b559 subunit alpha.